We begin with the raw amino-acid sequence, 141 residues long: Decarboxylase CPUR_05434 (141 aa).

The EthD domain maps to Glu26–Thr121.

The protein belongs to the tpcK family.

It carries out the reaction atrochrysone carboxylate + H(+) = atrochrysone + CO2. Decarboxylase; part of the ergochrome gene cluster responsible for the typical purple-black color of the ergot sclerotia. The ergochrome gene cluster produces several ergot pigments including the yellow ergochrome secalonic acid and its derivatives, as well as the red anthraquinones endocrocin and clavorubin. The pathway begins with the synthesis of atrochrysone thioester by the polyketide synthase (PKS) CPUR_05437. The atrochrysone carboxyl ACP thioesterase CPUR_05436 then breaks the thioester bond and releases the atrochrysone carboxylic acid from CPUR_05437. The decarboxylase CPUR_05434 then catalyzes the concerted decarboxylation-elimination required to convert atochrysone carboxylic acid into emodin anthrone, which is further oxidized to emodin by the anthrone oxygenase CPUR_05435. Emodin is further modified to yield monodictyphenone via several steps involving CPUR_05427, CPUR_05428, CPUR_05429 and CPUR_05430. The short chain dehydrogenase/reductase CPUR_05418 then catalyzes the C-5 ketoreduction to give the xanthone skeleton of the monomeric units. Ergochromes formation requires further dimerization steps of different xanthone units, probably catalyzed by the cytochrome P450 monooxygenase CPUR_05419. CPUR_05425, CPUR_05426 and CPUR_05431 are unique to Claviceps, thus it is likely that they are involved in further modification of xanthone units or in their dimerization. The yellow ergochromes and the red anthraquinone pigments endocrocin and clavorubin are products from the same PKS derived precursors and the latter are likely shunt products in the pathway of xanthone biosynthesis. It is proposed that atrochrysone carboxylic acid released from the PKS CPUR_05437 can also be converted to endocrocin anthrone which is further oxidized into endocrocin by CPUR_05435. Endocrocin could be then modified to clavorubin, possibly by CPUR_05423 and CPUR_05431. Clavorubin is the principal anthraquinone metabolite produced by the cluster with a much higher yield compared to endocrocin. The chain is Decarboxylase CPUR_05434 from Claviceps purpurea (strain 20.1) (Ergot fungus).